The primary structure comprises 334 residues: GTP 3',8-cyclase (334 aa).

Residues 13–239 (RFHRKFYYLR…KVKAANDGPA (227 aa)) enclose the Radical SAM core domain. Arg-22 is a GTP binding site. [4Fe-4S] cluster contacts are provided by Cys-29 and Cys-33. Tyr-35 contributes to the S-adenosyl-L-methionine binding site. Residue Cys-36 coordinates [4Fe-4S] cluster. Arg-73 is a GTP binding site. Gly-77 is an S-adenosyl-L-methionine binding site. GTP is bound at residue Thr-104. S-adenosyl-L-methionine is bound at residue Ser-128. Lys-165 lines the GTP pocket. Met-199 provides a ligand contact to S-adenosyl-L-methionine. [4Fe-4S] cluster contacts are provided by Cys-262 and Cys-265. 267 to 269 (RLR) is a GTP binding site. A [4Fe-4S] cluster-binding site is contributed by Cys-279.

This sequence belongs to the radical SAM superfamily. MoaA family. As to quaternary structure, monomer and homodimer. Requires [4Fe-4S] cluster as cofactor.

It catalyses the reaction GTP + AH2 + S-adenosyl-L-methionine = (8S)-3',8-cyclo-7,8-dihydroguanosine 5'-triphosphate + 5'-deoxyadenosine + L-methionine + A + H(+). Its pathway is cofactor biosynthesis; molybdopterin biosynthesis. Its function is as follows. Catalyzes the cyclization of GTP to (8S)-3',8-cyclo-7,8-dihydroguanosine 5'-triphosphate. The sequence is that of GTP 3',8-cyclase from Vibrio vulnificus (strain YJ016).